A 442-amino-acid chain; its full sequence is UDP-N-acetylmuramoylalanine--D-glutamate ligase (442 aa).

An ATP-binding site is contributed by 115–121; it reads GSNGKST.

It belongs to the MurCDEF family.

The protein resides in the cytoplasm. It catalyses the reaction UDP-N-acetyl-alpha-D-muramoyl-L-alanine + D-glutamate + ATP = UDP-N-acetyl-alpha-D-muramoyl-L-alanyl-D-glutamate + ADP + phosphate + H(+). It functions in the pathway cell wall biogenesis; peptidoglycan biosynthesis. Functionally, cell wall formation. Catalyzes the addition of glutamate to the nucleotide precursor UDP-N-acetylmuramoyl-L-alanine (UMA). In Vibrio vulnificus (strain YJ016), this protein is UDP-N-acetylmuramoylalanine--D-glutamate ligase.